A 144-amino-acid polypeptide reads, in one-letter code: uncharacterized protein (144 aa).

Positions 2 to 144 (IELDAINPNN…EDSVLLSKKL (143 aa)) constitute an N-acetyltransferase domain.

The protein belongs to the acetyltransferase family.

The protein localises to the cytoplasm. Its subcellular location is the nucleus. This is an uncharacterized protein from Schizosaccharomyces pombe (strain 972 / ATCC 24843) (Fission yeast).